We begin with the raw amino-acid sequence, 294 residues long: 4-hydroxy-tetrahydrodipicolinate synthase (294 aa).

Threonine 45 lines the pyruvate pocket. Tyrosine 133 acts as the Proton donor/acceptor in catalysis. Catalysis depends on lysine 162, which acts as the Schiff-base intermediate with substrate. Isoleucine 204 provides a ligand contact to pyruvate.

Belongs to the DapA family. Homotetramer; dimer of dimers.

The protein resides in the cytoplasm. The enzyme catalyses L-aspartate 4-semialdehyde + pyruvate = (2S,4S)-4-hydroxy-2,3,4,5-tetrahydrodipicolinate + H2O + H(+). The protein operates within amino-acid biosynthesis; L-lysine biosynthesis via DAP pathway; (S)-tetrahydrodipicolinate from L-aspartate: step 3/4. Functionally, catalyzes the condensation of (S)-aspartate-beta-semialdehyde [(S)-ASA] and pyruvate to 4-hydroxy-tetrahydrodipicolinate (HTPA). The sequence is that of 4-hydroxy-tetrahydrodipicolinate synthase from Bartonella quintana (strain Toulouse) (Rochalimaea quintana).